A 409-amino-acid polypeptide reads, in one-letter code: Probable plastid-lipid-associated protein 12, chloroplastic (409 aa).

Residues 1–55 (MVAVRFYAVEMSLPCLCPCPSSPISLSLCSPRFNLLNTTSRRLGLSRNCRTLRIS) constitute a chloroplast transit peptide.

Belongs to the PAP/fibrillin family.

It is found in the plastid. It localises to the chloroplast thylakoid. The sequence is that of Probable plastid-lipid-associated protein 12, chloroplastic (PAP12) from Arabidopsis thaliana (Mouse-ear cress).